A 278-amino-acid polypeptide reads, in one-letter code: Splicing factor YJU2 (278 aa).

Residues Cys51, Cys54, Cys88, and Cys91 each contribute to the Zn(2+) site. The disordered stretch occupies residues 228–278; the sequence is HRQRTNKPGNNNDEKRTPLFNPTSTKGKIQKKSSVRTNPLGIVIKRGKSLK. 2 short sequence motifs (nuclear localization signal) span residues 242–258 and 260–278; these read KRTP…KIQK and SSVR…KSLK.

The protein belongs to the CWC16 family. YJU2 subfamily. Component of the spliceosome. Present in the activated B complex, the catalytically activated B* complex which catalyzes the branching, the catalytic step 1 C complex catalyzing the exon ligation, and the postcatalytic P complex containing the ligated exons (mRNA) and the excised lariat intron. Interacts (via C-terminus) with CLF1. Interacts (via N-terminus) with SYF1. Interacts with U2 snRNA; this interaction is direct. Identified in the CWC complex (or CEF1-associated complex), a spliceosome sub-complex reminiscent of a late-stage spliceosome composed of the U2, U5 and U6 snRNAs and at least BUD13, BUD31, BRR2, CDC40, CEF1, CLF1, CUS1, CWC2, CWC15, CWC21, CWC22, CWC23, CWC24, CWC25, CWC27, ECM2, HSH155, IST3, ISY1, LEA1, MSL1, NTC20, PRP8, PRP9, PRP11, PRP19, PRP21, PRP22, PRP45, PRP46, SLU7, SMB1, SMD1, SMD2, SMD3, SMX2, SMX3, SNT309, SNU114, SPP2, SYF1, SYF2, RSE1 and YJU2.

It localises to the nucleus. Its function is as follows. Part of the spliceosome which catalyzes two sequential transesterification reactions, first the excision of the non-coding intron from pre-mRNA and then the ligation of the coding exons to form the mature mRNA. Plays a role (via N-terminus) in stabilizing the structure of the spliceosome catalytic core and docking of the branch helix into the active site, producing 5'-exon and lariat intron-3'-intermediates. Further stabilizes spliceosome conformation for 3'-splice site docking (via C-terminus) promoting exon ligation. This chain is Splicing factor YJU2, found in Saccharomyces cerevisiae (strain ATCC 204508 / S288c) (Baker's yeast).